The following is a 387-amino-acid chain: Anhydro-N-acetylmuramic acid kinase (387 aa).

Residue 17–24 (GTSMDGVD) participates in ATP binding.

The protein belongs to the anhydro-N-acetylmuramic acid kinase family.

The enzyme catalyses 1,6-anhydro-N-acetyl-beta-muramate + ATP + H2O = N-acetyl-D-muramate 6-phosphate + ADP + H(+). It participates in amino-sugar metabolism; 1,6-anhydro-N-acetylmuramate degradation. Its pathway is cell wall biogenesis; peptidoglycan recycling. Catalyzes the specific phosphorylation of 1,6-anhydro-N-acetylmuramic acid (anhMurNAc) with the simultaneous cleavage of the 1,6-anhydro ring, generating MurNAc-6-P. Is required for the utilization of anhMurNAc either imported from the medium or derived from its own cell wall murein, and thus plays a role in cell wall recycling. The chain is Anhydro-N-acetylmuramic acid kinase from Burkholderia pseudomallei (strain K96243).